A 203-amino-acid polypeptide reads, in one-letter code: Small ribosomal subunit protein uS4 (203 aa).

The 62-residue stretch at 93 to 154 folds into the S4 RNA-binding domain; sequence RRLDNVVFRA…KSRNMDAVTD (62 aa).

It belongs to the universal ribosomal protein uS4 family. As to quaternary structure, part of the 30S ribosomal subunit. Contacts protein S5. The interaction surface between S4 and S5 is involved in control of translational fidelity.

One of the primary rRNA binding proteins, it binds directly to 16S rRNA where it nucleates assembly of the body of the 30S subunit. Functionally, with S5 and S12 plays an important role in translational accuracy. This Chlorobium luteolum (strain DSM 273 / BCRC 81028 / 2530) (Pelodictyon luteolum) protein is Small ribosomal subunit protein uS4.